The sequence spans 194 residues: Thymidylate kinase (194 aa).

7-14 (GVDCVGKS) serves as a coordination point for ATP.

This sequence belongs to the thymidylate kinase family.

It catalyses the reaction dTMP + ATP = dTDP + ADP. Phosphorylation of dTMP to form dTDP in both de novo and salvage pathways of dTTP synthesis. The polypeptide is Thymidylate kinase (Campylobacter lari (strain RM2100 / D67 / ATCC BAA-1060)).